Reading from the N-terminus, the 208-residue chain is GTP-binding protein Rho1 (208 aa).

19 to 26 (GDGACGKT) lines the GTP pocket. The short motif at 41–49 (YVPTVFDNY) is the Effector region element. Residues 66–70 (DTAGQ) and 124–127 (CKAD) each bind GTP. The tract at residues 188 to 208 (GKQGKSKPKTKSSKKKKCVVL) is disordered. The span at 191 to 208 (GKSKPKTKSSKKKKCVVL) shows a compositional bias: basic residues. A Cysteine methyl ester modification is found at C205. A lipid anchor (S-geranylgeranyl cysteine) is attached at C205. The propeptide at 206-208 (VVL) is removed in mature form.

This sequence belongs to the small GTPase superfamily. Rho family.

It is found in the cell membrane. This Kluyveromyces lactis (strain ATCC 8585 / CBS 2359 / DSM 70799 / NBRC 1267 / NRRL Y-1140 / WM37) (Yeast) protein is GTP-binding protein Rho1 (RHO1).